Reading from the N-terminus, the 698-residue chain is Epithelial sodium channel subunit alpha (698 aa).

Positions 1–70 (MLDHTRAPEL…SAPRQPTEEE (70 aa)) are disordered. The Cytoplasmic portion of the chain corresponds to 1-110 (MLDHTRAPEL…CSKHNRMKTA (110 aa)). The chain crosses the membrane as a helical span at residues 111-131 (FWAVLWLCTFGMMYWQFALLF). Residues 132–589 (EEYLSYPVSL…SQWSLWFGSS (458 aa)) lie on the Extracellular side of the membrane. 3 disulfides stabilise this stretch: Cys-158/Cys-332, Cys-256/Cys-263, and Cys-309/Cys-316. Asn-190 carries an N-linked (GlcNAc...) asparagine glycan. The tract at residues 200–270 (RRRSSRDLLG…SDCFYQTYSS (71 aa)) is gating release of inhibition by proteolysis (GRIP); protease-sensitive region that is responsible for the proteolytic activation of the channel. The tract at residues 213–243 (HPLQRLRTPPPPYSGRTARSGSSSVRDNNPQ) is disordered. Residues 229-243 (TARSGSSSVRDNNPQ) are compositionally biased toward polar residues. N-linked (GlcNAc...) asparagine glycosylation occurs at Asn-259. Asn-320, Asn-339, and Asn-424 each carry an N-linked (GlcNAc...) asparagine glycan. Disulfide bonds link Cys-421–Cys-506, Cys-443–Cys-483, Cys-443–Cys-502, Cys-447–Cys-498, Cys-456–Cys-483, Cys-456–Cys-506, and Cys-458–Cys-472. A glycan (N-linked (GlcNAc...) asparagine) is linked at Asn-538. Residues 590–610 (VLSVVEMAELIFDLLVITLLM) traverse the membrane as a helical segment. Residues 611–698 (LLRRFRSRYW…DCSACALAAL (88 aa)) are Cytoplasmic-facing. A disordered region spans residues 637 to 663 (ASSFPSRFCPHPTSPPPSLPQQGMTPP). The short motif at 669–673 (PPPAY) is the PY motif; recruits WW domain-containing proteins and is thereby required for ubiquitination and inhibition of the channel by NEDD4 and NEDD4L element.

It belongs to the amiloride-sensitive sodium channel (TC 1.A.6) family. SCNN1A subfamily. Heterotrimer; containing an alpha/SCNN1A, a beta/SCNN1B and a gamma/SCNN1G subunit. Interacts with WWP1 (via WW domains). Interacts with WWP2 (via WW domains); inhibits the channel. Interacts with BPIFA1; the interaction is indirect via SCNN1B and inhibits the proteolytic processing of SCNN1A and SCNN1G and the activation of ENaC. Interacts with the full-length immature form of PCSK9 (pro-PCSK9). In terms of processing, ubiquitinated. Can be ubiquitinated at multiple sites and undergo monoubiquitination and polyubiquitination. Ubiquitination by NEDD4 or NEDD4L inhibits the ENaC channel through endocytosis, intracellular retention and degradation of its individual subunits. N-glycosylated. Post-translationally, ENaC is activated through the proteolytic maturation of its subunits. Furin cleaves the SCNN1A subunit, which results in a stepwise increase in the open probability of the channel due to the release of an inhibitory tract. BPIFA1, which is recruited by the SCNN1B subunit, prevents the proteolytic activation of ENaC. Detected in kidney, lung and testis (at protein level). In the testis, detected within the seminiferous tubules but not in the interstitial cells (at protein level).

The protein localises to the apical cell membrane. It is found in the cell projection. It localises to the cilium. Its subcellular location is the cytoplasmic granule. The protein resides in the cytoplasm. The protein localises to the cytoplasmic vesicle. It is found in the secretory vesicle. It localises to the acrosome. Its subcellular location is the flagellum. The enzyme catalyses Na(+)(in) = Na(+)(out). Its activity is regulated as follows. Originally identified and characterized by its inhibition by the diuretic drug amiloride. This is one of the three pore-forming subunits of the heterotrimeric epithelial sodium channel (ENaC), a critical regulator of sodium balance and fluid homeostasis. ENaC operates in epithelial tissues, where it mediates the electrodiffusion of sodium ions from extracellular fluid through the apical membrane of cells, with water following osmotically. It plays a key role in maintaining sodium homeostasis through electrogenic sodium reabsorption in the kidneys. Additionally, ENaC is essential for airway surface liquid homeostasis, which is crucial for proper mucus clearance. In Rattus norvegicus (Rat), this protein is Epithelial sodium channel subunit alpha.